The chain runs to 228 residues: Large ribosomal subunit protein bL25 (228 aa).

Residues 1–24 (MATVMELKATARPKSGKGAARAER) are disordered.

It belongs to the bacterial ribosomal protein bL25 family. CTC subfamily. In terms of assembly, part of the 50S ribosomal subunit; part of the 5S rRNA/L5/L18/L25 subcomplex. Contacts the 5S rRNA. Binds to the 5S rRNA independently of L5 and L18.

This is one of the proteins that binds to the 5S RNA in the ribosome where it forms part of the central protuberance. This Nitrobacter winogradskyi (strain ATCC 25391 / DSM 10237 / CIP 104748 / NCIMB 11846 / Nb-255) protein is Large ribosomal subunit protein bL25.